The primary structure comprises 501 residues: Circadian clock oscillator protein KaiC (501 aa).

2 KaiC domains span residues methionine 1–phenylalanine 232 and isoleucine 246–lysine 501. ATP contacts are provided by glycine 34, threonine 35, glycine 36, lysine 37, threonine 38, serine 74, lysine 209, leucine 210, arginine 211, threonine 213, histidine 215, threonine 275, glycine 276, threonine 277, glycine 278, lysine 279, and threonine 280. Threonine 38 is a binding site for Mg(2+). 2 residues coordinate Mg(2+): threonine 280 and glutamate 303. Tryptophan 316 provides a ligand contact to ATP. Serine 416 is modified (phosphoserine; by autocatalysis). Position 417 is a phosphothreonine; by autocatalysis (threonine 417). The ATP site is built by arginine 436, lysine 442, methionine 443, arginine 444, serine 446, histidine 448, and lysine 450.

It belongs to the KaiC family. Homohexamer; hexamerization is dependent on ATP-binding. Component of the KaiBC complex. KaiC interacts with SasA, activating its autokinase function and leading to RpaA activation. Requires Mg(2+) as cofactor. In terms of processing, phosphorylated on serine and threonine residues by autocatalysis. Has a 4 step phosphorylation cycle; the autokinase acts first on Thr-417, then Ser-416. When Ser-416 is modified KaiC switches to an autophosphatase mode, acting first on phospho-Thr-417 then phospho-Ser-416.

It catalyses the reaction L-seryl-[protein] + ATP = O-phospho-L-seryl-[protein] + ADP + H(+). The catalysed reaction is L-threonyl-[protein] + ATP = O-phospho-L-threonyl-[protein] + ADP + H(+). The enzyme catalyses ATP + H2O = ADP + phosphate + H(+). Central component of the KaiBC oscillator complex, which constitutes the main circadian regulator in cyanobacteria. Its composition changes during the circadian cycle to control KaiC phosphorylation. Autophosphorylates and has a weak ATPase activity; ATPase activity defines the circadian period. The sequence is that of Circadian clock oscillator protein KaiC from Prochlorococcus marinus (strain SARG / CCMP1375 / SS120).